Reading from the N-terminus, the 186-residue chain is Ribosome-recycling factor (186 aa).

This sequence belongs to the RRF family.

Its subcellular location is the cytoplasm. Functionally, responsible for the release of ribosomes from messenger RNA at the termination of protein biosynthesis. May increase the efficiency of translation by recycling ribosomes from one round of translation to another. The polypeptide is Ribosome-recycling factor (Rickettsia africae (strain ESF-5)).